A 477-amino-acid chain; its full sequence is ETS translocation variant 1 (477 aa).

Ser94 carries the phosphoserine modification. A disordered region spans residues 128–179; sequence PQVGMRPSNPPTPSSTPVSPLHHASPNTAHTPKPDRAFPAHLPPSQSIPDST. Phosphoserine; by RPS6KA1 and RPS6KA5 occurs at positions 191 and 216. A Glycyl lysine isopeptide (Lys-Gly) (interchain with G-Cter in SUMO2) cross-link involves residue Lys317. The ETS DNA-binding region spans 335 to 415; it reads LQLWQFLVAL…AGERYVYKFV (81 aa).

This sequence belongs to the ETS family. In terms of processing, sumoylated. Post-translationally, phosphorylated at Ser-191 and Ser-216 by RPS6KA1 and RPS6KA5; phosphorylation activates transcriptional activity. Abundant in kidney. Moderate levels seen in the heart, brain, lung, embryo and lower levels seen in spleen, intestine, testis and thymus.

The protein resides in the nucleus. Transcriptional activator that binds to DNA sequences containing the consensus pentanucleotide 5'-CGGA[AT]-3'. Required for olfactory dopaminergic neuron differentiation; may directly activate expression of tyrosine hydroxylase (TH). The chain is ETS translocation variant 1 from Mus musculus (Mouse).